The primary structure comprises 1574 residues: Disco-interacting protein 2 homolog B (1574 aa).

Phosphoserine occurs at positions 9, 50, and 53. The 119-residue stretch at 12-130 folds into the DMAP1-binding domain; sequence AVAALPPEVR…PMPTKRRSTF (119 aa). The interval 31-166 is disordered; sequence LSEGDITQKG…AALSAALQQS (136 aa). The span at 52 to 62 shows a compositional bias: polar residues; sequence YSPQTQETDSI. The segment covering 69 to 82 has biased composition (low complexity); it reads QTPAPTAAQTSAPS. The residue at position 70 (Thr-70) is a Phosphothreonine. Over residues 91–103 the composition is skewed to basic and acidic residues; that stretch reads GARDERYRSDIHT. Phosphoserine is present on Ser-99. Thr-139 is modified (phosphothreonine). Residues Ser-145, Ser-147, and Ser-152 each carry the phosphoserine modification. The span at 154-166 shows a compositional bias: low complexity; it reads RRQAALSAALQQS. Phosphoserine occurs at positions 177, 192, and 202. A disordered region spans residues 178–200; that stretch reads IQGSSTSSSASSTLSHGEVKGTS. Residues 181–192 show a composition bias toward low complexity; it reads SSTSSSASSTLS. The interval 217–244 is disordered; the sequence is APPDVTATTSSSSSSLRPANIDLPPSGI. A Phosphoserine modification is found at Ser-256.

Belongs to the DIP2 family. Interacts with alpha-tubulin. Highly expressed in brain and spinal cord (at protein level). In brain, expression is detected in the main olfactory bulb, cortex, lateral ventricle, cornu ammonis 1, cornu ammonis 3, dentate gyrus, striatum, cerebellar cortex and medial habenula. Expressed primarily in neurons including excitatory pyramidal neurons and inhibitory interneurons.

It is found in the cell projection. The protein resides in the dendrite. The protein localises to the axon. Its subcellular location is the perikaryon. Its function is as follows. Negatively regulates axonal outgrowth and is essential for normal synaptic transmission. Not required for regulation of axon polarity. Promotes acetylation of alpha-tubulin. The chain is Disco-interacting protein 2 homolog B (Dip2b) from Mus musculus (Mouse).